The sequence spans 516 residues: Cytochrome P450 monooxygenase lcsI (516 aa).

Residues 20–42 traverse the membrane as a helical segment; that stretch reads ICVAAGCAFALSLLYLYVRALYL. N-linked (GlcNAc...) asparagine glycosylation is found at Asn131, Asn184, Asn415, Asn420, and Asn442. Position 456 (Cys456) interacts with heme.

This sequence belongs to the cytochrome P450 family. It depends on heme as a cofactor.

It localises to the membrane. Its pathway is secondary metabolite biosynthesis. Its function is as follows. Cytochrome P450 monooxygenase; part of the gene cluster that mediates the biosynthesis of the lipopeptide antibiotics leucinostatins that show extensive biological activities, including antimalarial, antiviral, antibacterial, antifungal, and antitumor activities, as well as phytotoxic. Leucinostatin A contains nine amino acid residues, including the unusual amino acid 4-methyl-L-proline (MePro), 2-amino-6-hydroxy-4-methyl-8-oxodecanoic acid (AHyMeOA), 3-hydroxyleucine (HyLeu), alpha-aminoisobutyric acid (AIB), beta-Ala, a 4-methylhex-2-enoic acid at the N-terminus as well as a N1,N1-dimethylpropane-1,2-diamine (DPD) at the C-terminus. The biosynthesis of leucinostatins is probably initiated with the assembly of 4-methylhex-2-enoic acid by a reducing PKS. Two reducing polyketide synthases, lcsB and lcsC, have been identified in the cluster and it is not clear which is the one that assembles 4-methylhex-2-enoic acid since both contain KS, AT, DH, cMT, ER, KR and ACP domains. The polyketide residue might be transferred to the NRPS lcsA, mediated by two additional enzymes, the acyl-CoA ligase lcsD and the thioesterase lcsE. The linear polyketide carboxylic acid, which is released from PKS, is converted to a CoA thioester by lcsD, and then lcsE hydrolyzes the thiol bond and shuttles the polyketide intermediate to lcsA. The C domain of the first module catalyzed the condensation of 4-methylhex-2-enoic acid and MePro carried by domain A1, followed by successive condensations of nine amino acids to trigger the elongation of the linear peptide. A5 and A6 domains of lcsA are proposed to incorporate leucine, A2 AHyMeOA, and A3 incorporates HyLeu. A4, A7 and A8 incorporate AIB. The AHyMeOA in leucinostatin A activated by the A2 might be produced by the second PKS (lcsB or lcsC) present within the cluster. The MePro is probably produced via leucine cyclization and may originate from a separate pathway, independent of the cluster. Another nonproteinogenic amino acid, beta-Ala, could be produced by an aspartic acid decarboxylase also localized outside of the cluster. Two candidates are VFPBJ_01400 and VFPBJ_10476. The final peptide scaffold may be released by the NAD(P)H-dependent thioester reductase (TE) at the C-terminal region of lcsA. Transamination of the lcsA product by the transaminase lcsP may produce DPD at the C-terminus. Further hydroxylation steps performed alternatively by the cytochrome P450 monooxygenases lcsI, lcsK and lcsN then yield the non-methylated leucinostatins precursor. It is also possible that leucines can be hydroxylated prior to their incorporation into the peptide. Varying extents of methylation then lead to the formation of leucinostatins A and B. The sequence is that of Cytochrome P450 monooxygenase lcsI from Purpureocillium lilacinum (Paecilomyces lilacinus).